We begin with the raw amino-acid sequence, 259 residues long: Imidazole glycerol phosphate synthase subunit HisF (259 aa).

Residues Asp-11 and Asp-130 contribute to the active site.

The protein belongs to the HisA/HisF family. Heterodimer of HisH and HisF.

The protein resides in the cytoplasm. The catalysed reaction is 5-[(5-phospho-1-deoxy-D-ribulos-1-ylimino)methylamino]-1-(5-phospho-beta-D-ribosyl)imidazole-4-carboxamide + L-glutamine = D-erythro-1-(imidazol-4-yl)glycerol 3-phosphate + 5-amino-1-(5-phospho-beta-D-ribosyl)imidazole-4-carboxamide + L-glutamate + H(+). It participates in amino-acid biosynthesis; L-histidine biosynthesis; L-histidine from 5-phospho-alpha-D-ribose 1-diphosphate: step 5/9. IGPS catalyzes the conversion of PRFAR and glutamine to IGP, AICAR and glutamate. The HisF subunit catalyzes the cyclization activity that produces IGP and AICAR from PRFAR using the ammonia provided by the HisH subunit. In Syntrophobacter fumaroxidans (strain DSM 10017 / MPOB), this protein is Imidazole glycerol phosphate synthase subunit HisF.